A 378-amino-acid chain; its full sequence is S-adenosylmethionine synthase (378 aa).

ATP is bound at residue histidine 15. Residue aspartate 17 coordinates Mg(2+). Glutamate 43 is a binding site for K(+). L-methionine contacts are provided by glutamate 56 and glutamine 99. The segment at 99–109 (QSPDINQGINR) is flexible loop. ATP contacts are provided by residues 164–166 (DAK), 230–231 (RF), aspartate 239, 245–246 (RK), alanine 262, and lysine 266. L-methionine is bound at residue aspartate 239. Lysine 270 lines the L-methionine pocket.

This sequence belongs to the AdoMet synthase family. As to quaternary structure, homotetramer; dimer of dimers. Mg(2+) serves as cofactor. K(+) is required as a cofactor.

The protein resides in the cytoplasm. The catalysed reaction is L-methionine + ATP + H2O = S-adenosyl-L-methionine + phosphate + diphosphate. It functions in the pathway amino-acid biosynthesis; S-adenosyl-L-methionine biosynthesis; S-adenosyl-L-methionine from L-methionine: step 1/1. In terms of biological role, catalyzes the formation of S-adenosylmethionine (AdoMet) from methionine and ATP. The overall synthetic reaction is composed of two sequential steps, AdoMet formation and the subsequent tripolyphosphate hydrolysis which occurs prior to release of AdoMet from the enzyme. The protein is S-adenosylmethionine synthase of Buchnera aphidicola subsp. Acyrthosiphon pisum (strain 5A).